We begin with the raw amino-acid sequence, 184 residues long: Large ribosomal subunit protein uL22A (184 aa).

Lys-46 is covalently cross-linked (Glycyl lysine isopeptide (Lys-Gly) (interchain with G-Cter in ubiquitin)). Thr-70 carries the phosphothreonine modification.

It belongs to the universal ribosomal protein uL22 family. As to quaternary structure, component of the large ribosomal subunit (LSU). Mature yeast ribosomes consist of a small (40S) and a large (60S) subunit. The 40S small subunit contains 1 molecule of ribosomal RNA (18S rRNA) and 33 different proteins (encoded by 57 genes). The large 60S subunit contains 3 rRNA molecules (25S, 5.8S and 5S rRNA) and 46 different proteins (encoded by 81 genes). uL22 is associated with the polypeptide exit tunnel.

The protein resides in the cytoplasm. Its function is as follows. Component of the ribosome, a large ribonucleoprotein complex responsible for the synthesis of proteins in the cell. The small ribosomal subunit (SSU) binds messenger RNAs (mRNAs) and translates the encoded message by selecting cognate aminoacyl-transfer RNA (tRNA) molecules. The large subunit (LSU) contains the ribosomal catalytic site termed the peptidyl transferase center (PTC), which catalyzes the formation of peptide bonds, thereby polymerizing the amino acids delivered by tRNAs into a polypeptide chain. The nascent polypeptides leave the ribosome through a tunnel in the LSU and interact with protein factors that function in enzymatic processing, targeting, and the membrane insertion of nascent chains at the exit of the ribosomal tunnel. This chain is Large ribosomal subunit protein uL22A, found in Saccharomyces cerevisiae (strain ATCC 204508 / S288c) (Baker's yeast).